Reading from the N-terminus, the 327-residue chain is MGSPNAAAETDLTTDDFIGDTRRDSGSDTETNTDCDGEDLPLLLLPAPPGHFEEGERVLAKHSDCFYEAKVLKVEFKDNEWKYFVHYIGWNKSWDEWIRLDCLLKHSDENIEKQKEQGLKQQGIKSAMAWKVSKMKPRSPNVARGRKRKQDSVDTEKNVLPSDNLLSFNIPPALRKQLLDDFEFVTQMQKLVQLPRSPNVDGILKKYIDSQMKKHGRVTDSLEEILKGLRCYFDKALPVMLLYNNERKQYEESVSGGVSPSTVYGAEHLLRLFVKLPELLVHVNMAEETLKELQDNFVDILRFLRKNQSVLFVSTYKAVEEMEKKEG.

The disordered stretch occupies residues 1–40 (MGSPNAAAETDLTTDDFIGDTRRDSGSDTETNTDCDGEDL). The region spanning 52–101 (FEEGERVLAKHSDCFYEAKVLKVEFKDNEWKYFVHYIGWNKSWDEWIRLD) is the Tudor-knot domain. A disordered region spans residues 133 to 156 (SKMKPRSPNVARGRKRKQDSVDTE). One can recognise an MRG domain in the interval 162–327 (SDNLLSFNIP…AVEEMEKKEG (166 aa)).

As to quaternary structure, interacts with HAM1 and HAM2. Interacts (via MRG domain) with CO. Component of the NuA4 histone acetyltransferase complex. In terms of tissue distribution, ubiquitous. Mainly expressed in the vasculature of cotyledons and leaves, and in roots and inflorescences.

The protein resides in the nucleus. Chromatin remodeling factor. Acts as a 'reader' protein by binding to H3K4me3 and H3K36me3 to control histone H4 acetylation. Increases the transcriptional levels of the flowering time genes FLC and FT. Binds the chromatin at the FT promoter upon interaction with CO. The protein is Protein MRG2 of Arabidopsis thaliana (Mouse-ear cress).